The sequence spans 237 residues: CD99 antigen-like protein 2 (237 aa).

The signal sequence occupies residues 1 to 25 (MVARLTAFLVCLVFSLATLVQRGYG). The Extracellular segment spans residues 26 to 161 (DTDGFNLEDA…PGSGISTETG (136 aa)). A disordered region spans residues 47–157 (DHFSTTTRRP…SNDDPGSGIS (111 aa)). Composition is skewed to low complexity over residues 51-66 (TTTRRPVTTRAPANPA) and 74-84 (TTTTRRPGTTR). Basic and acidic residues predominate over residues 102 to 111 (DDRNDLDGPK). The O-linked (Xyl...) (chondroitin sulfate) serine glycan is linked to S154. The chain crosses the membrane as a helical span at residues 162 to 182 (TIAGVASALAMALIGAVSSYI). Residues 183–237 (SYQQKKFCFSIQQGLNADYVKGENLEAVVCEEPQVTYSKQETQSAEPPPPEPPRI) lie on the Cytoplasmic side of the membrane. The span at 218-227 (TYSKQETQSA) shows a compositional bias: polar residues. Positions 218–237 (TYSKQETQSAEPPPPEPPRI) are disordered. Residues 228 to 237 (EPPPPEPPRI) show a composition bias toward pro residues.

Belongs to the CD99 family. O-glycosylated. In terms of tissue distribution, highly expressed in the nervous system, including brain, dentate nucleus of hippocampus, granular and Purkinje cells of cerebellum, brain stem nucleus and choroid plexus. Expressed in peripheral blood T- and B-cells and neutrophils (at protein level). Almost undetectable in bone marrow-derived neutrophils (at protein level). Also expressed in thymocytes (at protein level) with higher expression in cortical thymocytes than in medullary thymocytes. Expressed at high levels in testis (mostly in germ cells and Sertoli cells) and ovary (mostly in granulosa cells). Expressed in lung, heart, kidney and liver (at protein level); however, expression in heart, kidney and liver seems restricted to endothelial cells (at protein level). Highly expressed in endothelial cells and to a lower level in vascular smooth muscle cells (at protein level). Low expression in spleen.

The protein localises to the cell membrane. The protein resides in the cell junction. It localises to the secreted. Functionally, plays a role in a late step of leukocyte extravasation helping cells to overcome the endothelial basement membrane. Acts at the same site as, but independently of, PECAM1. Homophilic adhesion molecule, but these interactions may not be required for cell aggregation. The sequence is that of CD99 antigen-like protein 2 (Cd99l2) from Mus musculus (Mouse).